Consider the following 153-residue polypeptide: Putative pre-16S rRNA nuclease (153 aa).

Belongs to the YqgF nuclease family.

The protein resides in the cytoplasm. Could be a nuclease involved in processing of the 5'-end of pre-16S rRNA. The chain is Putative pre-16S rRNA nuclease from Prochlorococcus marinus (strain AS9601).